The primary structure comprises 656 residues: MHTPLIDLRGIRKSYGGGDSPRVNVLRGIDLSIHAGEFVAIVGASGSGKSTLMNILGCLDRPTSGEYLFAGENVAELGGDELAWLRREAFGFVFQGYHLIPSGSAQENVEMPAIYAGTPAAERHARAAALLDRLGLASRTGNRPHQLSGGQQQRVSIARALMNGGHIILADEPTGALDSHSGAEVMTLLDELASQGHVVILITHDREVAARANRVIEISDGLVISDTARDLSTPRSANPAALQAVDLRKRLSEGSGSHGAWKGELLDAIQAAWRVMWVNRFRTALTLLGIVIGVASVVVMLAVGEGSKRQVMAQMSSFGSNIIYLNGKAPNPRAPKGVITLEEVAALGELPEVKMIMPVNGGQAGVRFGNVDHSSYVGGNDTHFPAIFNWPVAEGSYFSEADEQGAAAVAVIGYKVRQKLFGDRIDPIGQYILIENVPFQVVGVLQEKGATSGDLDSDNRIAIPYSSASIRLFGSQDPEYITIATRDANNVKQAEAAIRTLLQRLHNGKQDYELTNNAAMIQAEARTQNTLSLMLGSIAAISLLVGGIGVMNIMLMTVRERTREIGIRMATGARQRDILRQFLTEAVMLSVVGGLAGIVLALAMGAALLASKVAVAFTLSAVIGAFACALVTGVIFGFMPARKAARLDPVAALTSE.

The region spanning 6–245 is the ABC transporter domain; sequence IDLRGIRKSY…SANPAALQAV (240 aa). Residue 43-50 coordinates ATP; sequence GASGSGKS. 4 helical membrane passes run 284-304, 538-558, 589-609, and 619-639; these read ALTLLGIVIGVASVVVMLAVG, IAAISLLVGGIGVMNIMLMTV, LSVVGGLAGIVLALAMGAALL, and LSAVIGAFACALVTGVIFGFM.

This sequence belongs to the ABC transporter superfamily. Macrolide exporter (TC 3.A.1.122) family. In terms of assembly, part of the tripartite efflux system PvdRT-OpmQ, which is composed of an inner membrane component with both ATPase and permease domains, PvdT, a periplasmic membrane fusion protein, PvdR, and an outer membrane component, OpmQ.

The protein localises to the cell inner membrane. Part of the tripartite efflux system PvdRT-OpmQ required for the secretion into the extracellular milieu of the siderophore pyoverdine (PVD), which is involved in iron acquisition. This subunit binds PVD and drives its secretion by hydrolyzing ATP. The system is responsible for export of newly synthesized PVD after the final steps of biosynthesis have taken place in the periplasm. It is also responsible for recycling of PVD after internalization of ferri-PVD into the periplasm by the outer-membrane receptor FpvA and release of iron from PVD, thus making PVD available for new cycles of iron uptake. This Pseudomonas syringae pv. tomato (strain ATCC BAA-871 / DC3000) protein is Pyoverdine export ATP-binding/permease protein PvdT.